An 832-amino-acid chain; its full sequence is MSLWGQPLQASPPLAVRQPPTASSGPSTSPPAGATLNRLPEPLLRRLSESLDRAPEGRGWRQLAELAGSRGRLRLSGLDLEQCSLKVLEPEGSPSLCLLKLMGEKGCTVTELSDFLQALEHTEVLPLLNPPGLKITVNPESKAVLAGQFVKLCCRATGHPFVQYQWFKMNKEIPYGNSSELVFNTVHVKDAGFYVCRVNNSSTFEFSQWSQLDVCDVAEVTDSFQGSMDGISESRLQICVEPRSQRLVPGSMLLLQCVAIGSPMPHYQWFKDESPLTHETKKHYTVPYVDIEHEGTYWCHVYNDRDSQDSKKAEVTIGRTDEAVECTEDELNNLGHPDNKEQTGQPLAKDKVALLIGNMSYWEHPKLKAPLVDVYELTNLLRQLDFKVVSLLDLTEYEMCNAVDEFLLLLDKGVYGLLYYAGHGYENFGNSFMVPVDAPNPYRSENCLCVQNILKLMQEKETGLNVFLLDMCRKRNDYDDTIPILDALKVTANIVFGYATCQGAEAFEIQHSGLANGIFMKFLKDRLLEDKKITVLLDEVAEDMGKCHLTKGRQALEIRSSLSEKRALTDPVQGAPCSAEALVRNLQWAKAHELPESMCLKFQCGVHIQLGFAAEFSNVMIIYTSIVHKPPEIIMCDAYVTDFPLDLDIDPKHANKGTPEETGSYLVSKDLPKHCLYTRLSSLQKLKEHLIFTVCLSYQYSGLEDTVEEKQEVNVGKPLIAKLDMHRGLGRKTCFQACRMPDEPYHSSTSTSAGAGHFHSSQDSFHDVYHSHLGNADSGMPPDRCHCSRTPHTFISNYPPHHYCQFGRSNVPVETTDEMPFSFSDRLMISEN.

Positions 1–39 are disordered; sequence MSLWGQPLQASPPLAVRQPPTASSGPSTSPPAGATLNRL. Position 2 is an N-acetylserine (S2). A compositionally biased stretch (low complexity) spans 19–39; that stretch reads PPTASSGPSTSPPAGATLNRL. The region spanning 45-132 is the Death domain; it reads RRLSESLDRA…EVLPLLNPPG (88 aa). 2 Ig-like C2-type domains span residues 131 to 207 and 218 to 314; these read PGLK…FEFS and AEVT…KKAE. S141 carries the phosphoserine modification. Cystine bridges form between C154-C196 and C257-C299. The interval 356 to 570 is caspase-like; it reads IGNMSYWEHP…SLSEKRALTD (215 aa). Residues 377-384 carry the Nuclear export signal motif; sequence LTNLLRQL. Residues H423 and C472 contribute to the active site.

It belongs to the peptidase C14B family. Homooligomer; forms oligomers which bind to TRAF6. Forms a complex with CARD14 and MALT1; resulting in the formation of a CBM (CARD14-BCL10-MALT1) complex. Forms a complex with CARD11 and MALT1; resulting in the formation of a CBM (CARD11-BCL10-MALT1) complex. Forms a complex with CARD9 and MALT1; resulting in the formation of a CBM (CARD9-BCL10-MALT1) complex.

It is found in the cytoplasm. The protein resides in the perinuclear region. It localises to the nucleus. Functionally, protease that enhances BCL10-induced activation: acts via formation of CBM complexes that channel adaptive and innate immune signaling downstream of CARD domain-containing proteins (CARD9, CARD11 and CARD14) to activate NF-kappa-B and MAP kinase p38 pathways which stimulate expression of genes encoding pro-inflammatory cytokines and chemokines. Mediates BCL10 cleavage: MALT1-dependent BCL10 cleavage plays an important role in T-cell antigen receptor-induced integrin adhesion. Involved in the induction of T helper 17 cells (Th17) differentiation. Cleaves RC3H1 and ZC3H12A in response to T-cell receptor (TCR) stimulation which releases their cooperatively repressed targets to promote Th17 cell differentiation. Also mediates cleavage of N4BP1 in T-cells following TCR-mediated activation, leading to N4BP1 inactivation. May also have ubiquitin ligase activity: binds to TRAF6, inducing TRAF6 oligomerization and activation of its ligase activity. The sequence is that of Mucosa-associated lymphoid tissue lymphoma translocation protein 1 homolog from Mus musculus (Mouse).